The following is a 745-amino-acid chain: Aminopeptidase NAALADL1 (745 aa).

Over 1-6 (MHWAKI) the chain is Cytoplasmic. Residues 7 to 28 (LGVGIGAAALLGLGIILGHFAI) form a helical; Signal-anchor for type II membrane protein membrane-spanning segment. Topologically, residues 29 to 745 (PKATEPLASS…AATLQPVTDL (717 aa)) are extracellular. N-linked (GlcNAc...) asparagine glycans are attached at residues Asn-128, Asn-141, and Asn-235. 2 residues coordinate Ca(2+): Thr-263 and Leu-266. Asn-279, Asn-304, and Asn-350 each carry an N-linked (GlcNAc...) asparagine glycan. Cysteines 301 and 318 form a disulfide. Zn(2+)-binding residues include His-373 and Asp-383. Glu-421 acts as the Proton donor/acceptor in catalysis. Glu-422 lines the Zn(2+) pocket. Positions 430 and 433 each coordinate Ca(2+). Zn(2+) is bound at residue Asp-450. Residues Asn-456 and Asn-497 are each glycosylated (N-linked (GlcNAc...) asparagine). A Zn(2+)-binding site is contributed by His-550. Residues Asn-593 and Asn-620 are each glycosylated (N-linked (GlcNAc...) asparagine).

Belongs to the peptidase M28 family. M28B subfamily. As to quaternary structure, homodimer. It depends on Zn(2+) as a cofactor. Post-translationally, N-glycosylated. Detected on apical villi on the brush border membrane of ileum enterocytes (at protein level). Mainly expressed in the distal small intestine.

It is found in the apical cell membrane. Its function is as follows. Aminopeptidase with broad substrate specificity. Has lower activity with substrates that have Asp or Glu in the P2' position, or Pro in the P3' position. Lacks activity with substrates that have both Pro in the P3' position and Asp or Glu in the P2' position. Lacks carboxypeptidase activity. Lacks dipeptidyl-peptidase IV type activity. This is Aminopeptidase NAALADL1 (Naaladl1) from Rattus norvegicus (Rat).